A 625-amino-acid chain; its full sequence is Serine/threonine-protein kinase PknB (625 aa).

The Cytoplasmic segment spans residues 1 to 331 (MTTPQHLSDR…KQRSTSVARW (331 aa)). Residues 11-274 (YELGEILGFG…TAAEMRADLI (264 aa)) enclose the Protein kinase domain. ATP is bound by residues 17 to 25 (LGFGGMSEV), Lys-40, and 93 to 95 (EYV). The active-site Proton acceptor is the Asp-138. ATP contacts are provided by residues 140–143 (KPAN) and Asp-156. Mg(2+)-binding residues include Asn-143 and Asp-156. A Phosphoserine; by autocatalysis modification is found at Ser-169. Residues Thr-171, Thr-173, and Thr-294 each carry the phosphothreonine; by autocatalysis modification. The residue at position 295 (Ser-295) is a Phosphoserine; by autocatalysis. The disordered stretch occupies residues 302-321 (ADRAGAATQDMPVPRPAGYS). A Phosphothreonine; by autocatalysis modification is found at Thr-309. A helical membrane pass occupies residues 332–352 (LIAVAVLAVLTVVVTVAINMV). Over 353–625 (GGNPRNVQVP…DAKITLSFAA (273 aa)) the chain is Extracellular. 4 PASTA domains span residues 355-421 (NPRN…NVST), 422-489 (GPEQ…VVGA), 490-556 (GPED…RVSK), and 557-625 (GNQF…SFAA). A disordered region spans residues 591–612 (DVRDSGQRTNAVVTQSPSAGTP). Positions 597–611 (QRTNAVVTQSPSAGT) are enriched in polar residues.

It belongs to the protein kinase superfamily. Ser/Thr protein kinase family. Homodimer. In terms of processing, autophosphorylated. Dephosphorylated by PstP.

It localises to the cell membrane. It catalyses the reaction L-seryl-[protein] + ATP = O-phospho-L-seryl-[protein] + ADP + H(+). It carries out the reaction L-threonyl-[protein] + ATP = O-phospho-L-threonyl-[protein] + ADP + H(+). Its activity is regulated as follows. By K-252a. Functionally, protein kinase that regulates many aspects of mycobacterial physiology. Is a key component of a signal transduction pathway that regulates cell growth, cell shape and cell division via phosphorylation of target proteins. Probably phosphorylates RseA. The sequence is that of Serine/threonine-protein kinase PknB (pknB) from Mycolicibacterium smegmatis (strain ATCC 700084 / mc(2)155) (Mycobacterium smegmatis).